We begin with the raw amino-acid sequence, 480 residues long: Probable glycosyltransferase 2 (480 aa).

Positions 1-21 (MGQEGMGYNNGKGGGGGGGGL) are enriched in gly residues. A disordered region spans residues 1–45 (MGQEGMGYNNGKGGGGGGGGLPMTAPRPRGASPLSSHGHHHRSRK). Residues 1-49 (MGQEGMGYNNGKGGGGGGGGLPMTAPRPRGASPLSSHGHHHRSRKIHRT) are Cytoplasmic-facing. A helical; Signal-anchor for type II membrane protein membrane pass occupies residues 50–72 (FNNVKITVLCGLVTILVLRGTIG). Residues 73-480 (LNLSLPNQPT…DVKAKISTTS (408 aa)) are Lumenal-facing. Residues asparagine 74, asparagine 124, asparagine 129, and asparagine 458 are each glycosylated (N-linked (GlcNAc...) asparagine).

It belongs to the glycosyltransferase 34 family.

The protein localises to the golgi apparatus membrane. Its function is as follows. Probable glycosyltransferase that may be involved in the biosynthesis of xyloglucan. The sequence is that of Probable glycosyltransferase 2 from Oryza sativa subsp. indica (Rice).